Reading from the N-terminus, the 31-residue chain is Nemertide alpha-2 (31 aa).

3 disulfide bridges follow: Cys2/Cys16, Cys9/Cys20, and Cys15/Cys26. A 4-hydroxyproline mark is found at Pro28 and Pro29.

It belongs to the nemertide family. Confined to the epidermis and to the mucus layer.

It localises to the secreted. In terms of biological role, toxin with similar potency against both insect and mammalian sodium channels (Nav). Delays the inactivation of most Nav channels tested (B.germanica (BgNav1); EC(50)=87.2 nM, human Nav1.1/SCN1A; EC(50)=125.8 nM, rat Nav1.2/SCN2A; EC(50)=97.9 nM, rat Nav1.3/SCN3A; EC(50)=127.7 nM, rat Nav1.4/SCN4A; EC(50)=1150.3 nM, human Nav1.5/SCN5A; EC(50)=149.2 nM, mouse Nav1.6/SCN8A; EC(50)=1361.8 nM, human Nav1.9/SCN9A; EC(50)=1296.7 nM). Inactivation is completely prevented by a concentration of 1 uM, resulting in sustained, non-inactivating current. In addition, the toxin significantly enhances the recovery from inactivation, and the open state is not required for the toxin to interact with the channel. In vivo, injection into brine shrimp (Artemia salina) stops movement or causes death after 24 hours (EC(50)=2.9 uM). The protein is Nemertide alpha-2 of Lineus longissimus (Bootlace worm).